Here is a 292-residue protein sequence, read N- to C-terminus: Lipoyl synthase (292 aa).

Residues Cys38, Cys43, Cys49, Cys64, Cys68, Cys71, and Ser277 each contribute to the [4Fe-4S] cluster site. A Radical SAM core domain is found at 50-266 (WSKGTATFML…KNRAESLGFR (217 aa)).

This sequence belongs to the radical SAM superfamily. Lipoyl synthase family. [4Fe-4S] cluster is required as a cofactor.

It localises to the cytoplasm. It carries out the reaction [[Fe-S] cluster scaffold protein carrying a second [4Fe-4S](2+) cluster] + N(6)-octanoyl-L-lysyl-[protein] + 2 oxidized [2Fe-2S]-[ferredoxin] + 2 S-adenosyl-L-methionine + 4 H(+) = [[Fe-S] cluster scaffold protein] + N(6)-[(R)-dihydrolipoyl]-L-lysyl-[protein] + 4 Fe(3+) + 2 hydrogen sulfide + 2 5'-deoxyadenosine + 2 L-methionine + 2 reduced [2Fe-2S]-[ferredoxin]. It functions in the pathway protein modification; protein lipoylation via endogenous pathway; protein N(6)-(lipoyl)lysine from octanoyl-[acyl-carrier-protein]: step 2/2. Its function is as follows. Catalyzes the radical-mediated insertion of two sulfur atoms into the C-6 and C-8 positions of the octanoyl moiety bound to the lipoyl domains of lipoate-dependent enzymes, thereby converting the octanoylated domains into lipoylated derivatives. This Chlorobium limicola (strain DSM 245 / NBRC 103803 / 6330) protein is Lipoyl synthase.